Reading from the N-terminus, the 455-residue chain is Kynurenine 3-monooxygenase (455 aa).

This sequence belongs to the aromatic-ring hydroxylase family. KMO subfamily. FAD is required as a cofactor.

It carries out the reaction L-kynurenine + NADPH + O2 + H(+) = 3-hydroxy-L-kynurenine + NADP(+) + H2O. It participates in cofactor biosynthesis; NAD(+) biosynthesis; quinolinate from L-kynurenine: step 1/3. Functionally, catalyzes the hydroxylation of L-kynurenine (L-Kyn) to form 3-hydroxy-L-kynurenine (L-3OHKyn). Required for synthesis of quinolinic acid. In Xanthomonas euvesicatoria pv. vesicatoria (strain 85-10) (Xanthomonas campestris pv. vesicatoria), this protein is Kynurenine 3-monooxygenase.